The sequence spans 288 residues: Hyaluronidase (288 aa).

Asparagine 36 carries N-linked (GlcNAc...) asparagine glycosylation. The Proton donor role is filled by glutamate 66. A disulfide bridge connects residues cysteine 142 and cysteine 154. The N-linked (GlcNAc...) asparagine glycan is linked to asparagine 282.

Belongs to the glycosyl hydrolase 56 family. Expressed by the venom gland.

It is found in the secreted. The catalysed reaction is Random hydrolysis of (1-&gt;4)-linkages between N-acetyl-beta-D-glucosamine and D-glucuronate residues in hyaluronate.. Its function is as follows. Hydrolyzes high molecular weight hyaluronic acid to produce small oligosaccharides. This Polybia paulista (Neotropical social wasp) protein is Hyaluronidase.